The following is a 314-amino-acid chain: Melanocyte-stimulating hormone receptor (314 aa).

Residues 1–35 (MSMLAPLRLVREPWNASEGNQSNATAGAGGAWCQG) lie on the Extracellular side of the membrane. Residues Asn-15, Asn-20, and Asn-23 are each glycosylated (N-linked (GlcNAc...) asparagine). A helical membrane pass occupies residues 36 to 61 (LDIPNELFLTLGLVSLVENLLVVAAI). The Cytoplasmic portion of the chain corresponds to 62–70 (LKNRNLHSP). Residues 71 to 91 (TYYFICCLAVSDMLVSVSNLA) traverse the membrane as a helical segment. Residues 92-116 (KTLFMLLMEHGVLVIRASIVRHMDN) lie on the Extracellular side of the membrane. A helical membrane pass occupies residues 117–138 (VIDMLICSSVVSSLSFLGVIAV). The Cytoplasmic segment spans residues 139–161 (DRYITIFYALRYHSIMTLQRAVV). The helical transmembrane segment at 162–181 (TMASVWLASTVSSTVLITYY) threads the bilayer. Residues 182–189 (RNNAILLC) are Extracellular-facing. A helical transmembrane segment spans residues 190–209 (LIGFFLFMLVLMLVLYIHMF). Over 210–237 (ALACHHVRSISSQQKQPTIYRTSSLKGA) the chain is Cytoplasmic. The chain crosses the membrane as a helical span at residues 238 to 263 (VTLTILLGVFFICWGPFFFHLILIVT). Residues 264–276 (CPTNPFCTCFFSY) lie on the Extracellular side of the membrane. The chain crosses the membrane as a helical span at residues 277–297 (FNLFLILIICNSVVDPLIYAF). Residues 298 to 314 (RSQELRRTLREVVLCSW) are Cytoplasmic-facing. Cys-312 is lipidated: S-palmitoyl cysteine.

The protein belongs to the G-protein coupled receptor 1 family.

It localises to the cell membrane. In terms of biological role, receptor for MSH (alpha, beta and gamma) and ACTH. The activity of this receptor is mediated by G proteins which activate adenylate cyclase. Mediates melanogenesis via regulation of cAMP signaling in melanocytes. The chain is Melanocyte-stimulating hormone receptor (MC1R) from Gallus gallus (Chicken).